The primary structure comprises 337 residues: Transaldolase (337 aa).

The short motif at 1–10 (MSGSPVKRQR) is the Nuclear localization signal element. Lys-115 carries the N6-acetyllysine modification. Lys-142 functions as the Schiff-base intermediate with substrate in the catalytic mechanism. Lys-219 is subject to N6-acetyllysine. Ser-237 and Ser-256 each carry phosphoserine. 3 positions are modified to N6-acetyllysine: Lys-269, Lys-286, and Lys-321.

It belongs to the transaldolase family. Type 1 subfamily. As to quaternary structure, homodimer. Interacts with KPNA1 and KPNA4.

Its subcellular location is the nucleus. It localises to the cytoplasm. It carries out the reaction D-sedoheptulose 7-phosphate + D-glyceraldehyde 3-phosphate = D-erythrose 4-phosphate + beta-D-fructose 6-phosphate. It participates in carbohydrate degradation; pentose phosphate pathway; D-glyceraldehyde 3-phosphate and beta-D-fructose 6-phosphate from D-ribose 5-phosphate and D-xylulose 5-phosphate (non-oxidative stage): step 2/3. In terms of biological role, catalyzes the rate-limiting step of the non-oxidative phase in the pentose phosphate pathway. Catalyzes the reversible conversion of sedheptulose-7-phosphate and D-glyceraldehyde 3-phosphate into erythrose-4-phosphate and beta-D-fructose 6-phosphate. The polypeptide is Transaldolase (TALDO1) (Cricetulus griseus (Chinese hamster)).